The following is an 877-amino-acid chain: Leucine--tRNA ligase (877 aa).

A 'HIGH' region motif is present at residues 43–53 (PYPSGRIHMGH). A 'KMSKS' region motif is present at residues 628 to 632 (KMSKS). Lys-631 contributes to the ATP binding site.

It belongs to the class-I aminoacyl-tRNA synthetase family.

It is found in the cytoplasm. It carries out the reaction tRNA(Leu) + L-leucine + ATP = L-leucyl-tRNA(Leu) + AMP + diphosphate. In Brucella suis biovar 1 (strain 1330), this protein is Leucine--tRNA ligase.